The sequence spans 263 residues: Undecaprenyl-diphosphatase (263 aa).

A run of 7 helical transmembrane segments spans residues 38 to 58 (RSDF…CLAL), 75 to 95 (RDYV…GLIV), 108 to 128 (PVAW…HFAG), 135 to 155 (VVTW…GVFP), 181 to 201 (FVFM…LLEM), 217 to 237 (VAFI…LGYI), and 242 to 262 (FTVF…WLPA).

This sequence belongs to the UppP family.

Its subcellular location is the cell inner membrane. It catalyses the reaction di-trans,octa-cis-undecaprenyl diphosphate + H2O = di-trans,octa-cis-undecaprenyl phosphate + phosphate + H(+). Its function is as follows. Catalyzes the dephosphorylation of undecaprenyl diphosphate (UPP). Confers resistance to bacitracin. This is Undecaprenyl-diphosphatase from Xanthomonas campestris pv. campestris (strain 8004).